We begin with the raw amino-acid sequence, 957 residues long: Valine--tRNA ligase (957 aa).

A 'HIGH' region motif is present at residues 42–52 (PNVTGSLHMGH). Positions 554–558 (KMSKS) match the 'KMSKS' region motif. Lys-557 contacts ATP. Residues 890–956 (DKDAELARLA…LEAQQETIAA (67 aa)) adopt a coiled-coil conformation.

It belongs to the class-I aminoacyl-tRNA synthetase family. ValS type 1 subfamily. Monomer.

The protein resides in the cytoplasm. The enzyme catalyses tRNA(Val) + L-valine + ATP = L-valyl-tRNA(Val) + AMP + diphosphate. Its function is as follows. Catalyzes the attachment of valine to tRNA(Val). As ValRS can inadvertently accommodate and process structurally similar amino acids such as threonine, to avoid such errors, it has a 'posttransfer' editing activity that hydrolyzes mischarged Thr-tRNA(Val) in a tRNA-dependent manner. The chain is Valine--tRNA ligase from Aliivibrio fischeri (strain ATCC 700601 / ES114) (Vibrio fischeri).